The following is a 181-amino-acid chain: Large ribosomal subunit protein uL10 (181 aa).

The protein belongs to the universal ribosomal protein uL10 family. Part of the ribosomal stalk of the 50S ribosomal subunit. The N-terminus interacts with L11 and the large rRNA to form the base of the stalk. The C-terminus forms an elongated spine to which L12 dimers bind in a sequential fashion forming a multimeric L10(L12)X complex.

In terms of biological role, forms part of the ribosomal stalk, playing a central role in the interaction of the ribosome with GTP-bound translation factors. The polypeptide is Large ribosomal subunit protein uL10 (Amoebophilus asiaticus (strain 5a2)).